A 653-amino-acid chain; its full sequence is Multidomain regulatory protein MT1410 (653 aa).

Residues serine 86–alanine 142 form the PAC domain. The 220-residue stretch at aspartate 177–arginine 396 folds into the PPM-type phosphatase domain. Aspartate 211, valine 212, aspartate 328, and aspartate 387 together coordinate Mn(2+). The interval arginine 397–glutamine 544 is anti-sigma factor kinase region. Positions isoleucine 546–glutamate 653 constitute an STAS domain. Residue serine 600 is modified to Phosphoserine.

Requires Mg(2+) as cofactor. Mn(2+) is required as a cofactor. In terms of processing, autophosphorylated.

The catalysed reaction is O-phospho-L-seryl-[protein] + H2O = L-seryl-[protein] + phosphate. It carries out the reaction O-phospho-L-threonyl-[protein] + H2O = L-threonyl-[protein] + phosphate. The enzyme catalyses L-seryl-[protein] + ATP = O-phospho-L-seryl-[protein] + ADP + H(+). It catalyses the reaction L-threonyl-[protein] + ATP = O-phospho-L-threonyl-[protein] + ADP + H(+). Its function is as follows. Primarily acts as an independent SigF regulator that is sensitive to the osmosensory signal, mediating the cross talk of PknD with the SigF regulon. Possesses both phosphatase and kinase activities. The kinase domain functions as a classic anti-sigma factor-like kinase to phosphorylate the anti-anti-sigma factor domain at the canonical regulatory site, and the phosphatase domain antagonizes this activity. This is Multidomain regulatory protein MT1410 from Mycobacterium tuberculosis (strain CDC 1551 / Oshkosh).